We begin with the raw amino-acid sequence, 295 residues long: Forkhead box protein N5 (295 aa).

The interval Ser119–Asn146 is disordered. A DNA-binding region (fork-head) is located at residues Arg178–Leu275.

In terms of tissue distribution, ubiquitously expressed in early cleavage stage and gastrula stage embryos.

It localises to the nucleus. This is Forkhead box protein N5 from Xenopus laevis (African clawed frog).